The following is a 402-amino-acid chain: Multidrug resistance protein MdtH (402 aa).

Residues 1–12 (MSRVSQARNLGK) lie on the Cytoplasmic side of the membrane. A helical transmembrane segment spans residues 13–33 (YFLLIDNMLVVLGFFVVFPLI). The Periplasmic portion of the chain corresponds to 34 to 98 (SIRFVDQMGW…GFATMGIAHE (65 aa)). The chain crosses the membrane as a helical span at residues 99–116 (PWLLWFSCFLSGLGGTLF). Over 117–138 (DPPRSALVVKLIRPEQRGRFFS) the chain is Cytoplasmic. A helical membrane pass occupies residues 139-159 (LLMMQDSAGAVIGALLGSWLL). At 160–164 (QYDFR) the chain is on the periplasmic side. The chain crosses the membrane as a helical span at residues 165-185 (LVCATGAILFILCALFNAWLL). The Cytoplasmic segment spans residues 186–213 (PAWKLSTVRTPVREGMRRVMSDKRFVTY). A helical transmembrane segment spans residues 214–234 (VLTLAGYYMLAVQVMLMLPIM). Over 235-243 (VNDIAGSPA) the chain is Periplasmic. Residues 244-264 (AVKWMYAIEACLSLTLLYPIA) traverse the membrane as a helical segment. Topologically, residues 265 to 276 (RWSEKRFRLEHR) are cytoplasmic. Residues 277-297 (LMAGLLVMSLSMIPIGMVGNL) traverse the membrane as a helical segment. Residues 298 to 299 (QQ) lie on the Periplasmic side of the membrane. The helical transmembrane segment at 300 to 320 (LFTLICAFYIGSVIAEPARET) threads the bilayer. Residues 321–339 (LSASLADARARGSYMGFSR) lie on the Cytoplasmic side of the membrane. The helical transmembrane segment at 340-360 (LGLAIGGAIGYIGGGWLFDMG) threads the bilayer. Topologically, residues 361–367 (KALAQPE) are periplasmic. A helical transmembrane segment spans residues 368–388 (LPWMMLGIIGFITFLALGWQF). Over 389 to 402 (SHKRTPRRMLEPGA) the chain is Cytoplasmic.

It belongs to the major facilitator superfamily. DHA1 family. MdtH (TC 2.A.1.2.21) subfamily.

It is found in the cell inner membrane. In Salmonella schwarzengrund (strain CVM19633), this protein is Multidrug resistance protein MdtH.